Reading from the N-terminus, the 374-residue chain is Muconate cycloisomerase 1 (374 aa).

The protein belongs to the cycloisomerase 2 family. As to quaternary structure, homotetramer.

It carries out the reaction (S)-muconolactone = cis,cis-muconate + H(+). The protein operates within aromatic compound metabolism; beta-ketoadipate pathway; 5-oxo-4,5-dihydro-2-furylacetate from catechol: step 2/3. In terms of biological role, catalyzes a syn cycloisomerization. The chain is Muconate cycloisomerase 1 from Cutaneotrichosporon cutaneum (Yeast).